The following is a 114-amino-acid chain: Probable 4-amino-4-deoxy-L-arabinose-phosphoundecaprenol flippase subunit ArnE (114 aa).

3 helical membrane-spanning segments follow: residues 38–58 (LTLR…LLWL), 64–84 (LPLS…TLAA), and 94–114 (LRHW…SWHL). Positions 43-112 (LAIAVVSLGL…IMFGILLMSW (70 aa)) constitute an EamA domain.

This sequence belongs to the ArnE family. As to quaternary structure, heterodimer of ArnE and ArnF.

It localises to the cell inner membrane. It functions in the pathway bacterial outer membrane biogenesis; lipopolysaccharide biosynthesis. Its function is as follows. Translocates 4-amino-4-deoxy-L-arabinose-phosphoundecaprenol (alpha-L-Ara4N-phosphoundecaprenol) from the cytoplasmic to the periplasmic side of the inner membrane. This chain is Probable 4-amino-4-deoxy-L-arabinose-phosphoundecaprenol flippase subunit ArnE, found in Yersinia pestis bv. Antiqua (strain Antiqua).